A 337-amino-acid chain; its full sequence is Ornithine carbamoyltransferase, catabolic (337 aa).

Carbamoyl phosphate is bound by residues 57–60 (STRT), Gln84, Arg108, and 135–138 (HPTQ). L-ornithine-binding positions include Asn167, Asp231, and 235–236 (SM). Carbamoyl phosphate contacts are provided by residues 272 to 273 (CL) and Arg317.

It belongs to the aspartate/ornithine carbamoyltransferase superfamily. OTCase family.

It is found in the cytoplasm. It catalyses the reaction carbamoyl phosphate + L-ornithine = L-citrulline + phosphate + H(+). It participates in amino-acid degradation; L-arginine degradation via ADI pathway; carbamoyl phosphate from L-arginine: step 2/2. Functionally, reversibly catalyzes the transfer of the carbamoyl group from carbamoyl phosphate (CP) to the N(epsilon) atom of ornithine (ORN) to produce L-citrulline. This chain is Ornithine carbamoyltransferase, catabolic (arcB), found in Streptococcus pyogenes serotype M1.